Consider the following 325-residue polypeptide: Gamma-hemolysin component B (325 aa).

The signal sequence occupies residues 1–26; sequence MKMNKLVKSSVATSMALLLLSGTANA.

This sequence belongs to the aerolysin family. Toxicity requires sequential binding and synergistic association of a class S and a class F component which form heterooligomeric complexes. HlgB (class F) associates with either hlgA thus forming an AB toxin or with hlgC thus forming a CB toxin. Interacts with host AMFR.

It localises to the secreted. Functionally, toxin that seems to act by forming pores in the membrane of the cell. Has a hemolytic and a leucotoxic activity. Promotes host AMFR-mediated inflammation by mediating 'Lys-27'-linked ubiquitination of TAB3, TAK1-TAB3 complex formation and phosphorylation of TAK1/MAP3K7. In turn, activates host NF-kappa-B signaling pathway. The chain is Gamma-hemolysin component B (hlgB) from Staphylococcus aureus (strain NCTC 8325 / PS 47).